Here is a 438-residue protein sequence, read N- to C-terminus: Adenosylhomocysteinase (438 aa).

Thr-61, Asp-137, and Glu-162 together coordinate substrate. 163–165 (TTT) is a binding site for NAD(+). Substrate-binding residues include Lys-192 and Asp-196. NAD(+) is bound by residues Asn-197, 226–231 (GYGDVG), Glu-249, Asn-284, 305–307 (IGH), and Asn-352.

This sequence belongs to the adenosylhomocysteinase family. NAD(+) serves as cofactor.

It is found in the cytoplasm. The catalysed reaction is S-adenosyl-L-homocysteine + H2O = L-homocysteine + adenosine. It functions in the pathway amino-acid biosynthesis; L-homocysteine biosynthesis; L-homocysteine from S-adenosyl-L-homocysteine: step 1/1. May play a key role in the regulation of the intracellular concentration of adenosylhomocysteine. The protein is Adenosylhomocysteinase of Christiangramia forsetii (strain DSM 17595 / CGMCC 1.15422 / KT0803) (Gramella forsetii).